We begin with the raw amino-acid sequence, 371 residues long: Alginate lyase (371 aa).

The N-terminal stretch at 1 to 26 is a signal peptide; that stretch reads MQSTDLKRLLIPSLLGLAIVTGSAQA. Residues 67-68, 140-141, and Y258 contribute to the substrate site; these read SK and HT.

The protein belongs to the polysaccharide lyase 5 family.

The protein resides in the periplasm. The enzyme catalyses Eliminative cleavage of alginate to give oligosaccharides with 4-deoxy-alpha-L-erythro-hex-4-enuronosyl groups at their non-reducing ends and beta-D-mannuronate at their reducing end.. Catalyzes the depolymerization of alginate by cleaving the beta-1,4 glycosidic bond between two adjacent sugar residues via a beta-elimination mechanism. May serve to degrade mislocalized alginate that is trapped in the periplasmic space. The polypeptide is Alginate lyase (Pseudomonas fluorescens (strain ATCC BAA-477 / NRRL B-23932 / Pf-5)).